A 106-amino-acid chain; its full sequence is uncharacterized protein (106 aa).

The signal sequence occupies residues 1 to 25 (MSVIKKNIPAIGLCICAFFIHSAVG).

This sequence to the N-terminal of the FimA/PapA family of fimbria proteins.

This is an uncharacterized protein from Salmonella typhi.